A 145-amino-acid polypeptide reads, in one-letter code: Peptidyl-prolyl cis-trans isomerase (145 aa).

In terms of domain architecture, PPIase cyclophilin-type spans 1 to 145 (MTQAILETEK…LSVKIVTDAA (145 aa)).

It belongs to the cyclophilin-type PPIase family.

The enzyme catalyses [protein]-peptidylproline (omega=180) = [protein]-peptidylproline (omega=0). PPIases accelerate the folding of proteins. It catalyzes the cis-trans isomerization of proline imidic peptide bonds in oligopeptides. This Synechococcus elongatus (strain ATCC 33912 / PCC 7942 / FACHB-805) (Anacystis nidulans R2) protein is Peptidyl-prolyl cis-trans isomerase (rot).